The following is a 449-amino-acid chain: Anther-specific proline-rich protein APG (449 aa).

Over residues 1-118 (PPKPQPKPPP…KPPAPSPPKP (118 aa)) the composition is skewed to pro residues. A disordered region spans residues 1–123 (PPKPQPKPPP…SPPKPQNKTI (123 aa)). The Nucleophile role is filled by Ser-132. Active-site residues include Asp-425 and His-428.

This sequence belongs to the 'GDSL' lipolytic enzyme family. As to expression, found in anther, only in male fertile plants.

The protein is Anther-specific proline-rich protein APG (APG) of Brassica napus (Rape).